The primary structure comprises 111 residues: MKTATCSLLICVFLLQLMVPVNTDGTLDIIGKKKVKELLAHQDNYPSAVRKTLSCTNVKSMSKWASCPAGMTATGCSCGFACGSWEIQNENICNCLCLIVDWAYARCCQLS.

An N-terminal signal peptide occupies residues 1-23 (MKTATCSLLICVFLLQLMVPVNT). 5 disulfide bridges follow: C55–C108, C67–C107, C76–C93, C78–C95, and C82–C97.

This sequence belongs to the resistin/FIZZ family. Monomer. In terms of tissue distribution, highest levels in adipose tissue.

It localises to the secreted. Functionally, probable hormone. Plays a role in pulmonary vascular remodeling. The polypeptide is Resistin-like alpha (Retnla) (Rattus norvegicus (Rat)).